Reading from the N-terminus, the 639-residue chain is ATP-dependent zinc metalloprotease FtsH (639 aa).

Residues 1 to 4 lie on the Cytoplasmic side of the membrane; it reads MNST. The chain crosses the membrane as a helical span at residues 5-25; the sequence is VKTIVFWVFILACCILLWQVF. Residues 26–104 lie on the Periplasmic side of the membrane; that stretch reads QRSSNTGKEQ…TVKDNSGSPW (79 aa). Residues 105 to 125 traverse the membrane as a helical segment; it reads WSILIQFSPVLVLVALWFFMI. At 126-639 the chain is on the cytoplasmic side; that stretch reads RQMQSGGNKA…GLPEGSPSPA (514 aa). 196–203 contributes to the ATP binding site; the sequence is GPPGTGKT. His418 provides a ligand contact to Zn(2+). Glu419 is a catalytic residue. The Zn(2+) site is built by His422 and Asp494. The segment at 597 to 639 is disordered; that stretch reads KDLPPLKPSGGSGTATTDDVQQVLKPSSDRGAGGLPEGSPSPA.

This sequence in the central section; belongs to the AAA ATPase family. It in the C-terminal section; belongs to the peptidase M41 family. In terms of assembly, homohexamer. Zn(2+) serves as cofactor.

Its subcellular location is the cell inner membrane. Functionally, acts as a processive, ATP-dependent zinc metallopeptidase for both cytoplasmic and membrane proteins. Plays a role in the quality control of integral membrane proteins. The chain is ATP-dependent zinc metalloprotease FtsH from Acidobacterium capsulatum (strain ATCC 51196 / DSM 11244 / BCRC 80197 / JCM 7670 / NBRC 15755 / NCIMB 13165 / 161).